Consider the following 198-residue polypeptide: Nudix hydrolase 21, chloroplastic (198 aa).

Residues 1–37 (MISLFISNFSNLSNLSPTFDNMNMNIPSKKIVPVPTP) constitute a chloroplast transit peptide. The region spanning 59-191 (GYRQVVGCVP…WMREALEAFI (133 aa)) is the Nudix hydrolase domain. The Nudix box motif lies at 98 to 119 (GGWEIDESIEEAALRETIEEAG). Positions 113 and 117 each coordinate Mg(2+).

It belongs to the Nudix hydrolase family. Mg(2+) serves as cofactor. It depends on Mn(2+) as a cofactor. As to expression, expressed in roots, leaves, stems and inflorescences.

Its subcellular location is the plastid. It is found in the chloroplast. Probably mediates the hydrolysis of some nucleoside diphosphate derivatives. This is Nudix hydrolase 21, chloroplastic (NUDT21) from Arabidopsis thaliana (Mouse-ear cress).